We begin with the raw amino-acid sequence, 257 residues long: MKPLRLSSLDPVRMPEWRWAPFLSHAINALIPLKPEPYPVAPEFLQREGKTGSKSQPIKVTTCTWACRTKKFRQVRAACVEAGSSASVLNFVINPYHTFDLPFFGADLVTLPSGHLLALDLQPAITSDERHTKQVWERLMPIFEQWRVRLPEGGPIPEEAKPYFSPGFLWTRLHLGSEGNQLIDEVIMPAFRDYLNLYLDLVEMAEEVSPQRAFKLLEGQKRYLSYRGKKDPARAMLARFHGHQWTESYIHNVLFDL.

The protein belongs to the HY2 family.

It carries out the reaction (3Z)-phycoerythrobilin + oxidized 2[4Fe-4S]-[ferredoxin] = 15,16-dihydrobiliverdin + reduced 2[4Fe-4S]-[ferredoxin] + 2 H(+). Functionally, catalyzes the two-electron reduction of the C2 and C3(1) diene system of 15,16-dihydrobiliverdin. The protein is Phycoerythrobilin:ferredoxin oxidoreductase of Prochlorococcus marinus (strain MIT 9303).